The following is a 189-amino-acid chain: UPF0301 protein PSPA7_0505 (189 aa).

This sequence belongs to the UPF0301 (AlgH) family.

The polypeptide is UPF0301 protein PSPA7_0505 (Pseudomonas paraeruginosa (strain DSM 24068 / PA7) (Pseudomonas aeruginosa (strain PA7))).